The sequence spans 1132 residues: DNA topoisomerase 2 (1132 aa).

ATP is bound by residues N68, N100, S137–N139, and G150–K157. Residues N327–P329 are interaction with DNA. Q363 to K365 provides a ligand contact to ATP. The Toprim domain maps to C442 to S577. The Mg(2+) site is built by E448, D538, and D540. In terms of domain architecture, Topo IIA-type catalytic spans L713–I1125. Residue Y803 is the O-(5'-phospho-DNA)-tyrosine intermediate of the active site. Positions K979 to N988 are interaction with DNA.

The protein belongs to the type II topoisomerase family. Mg(2+) serves as cofactor. It depends on Mn(2+) as a cofactor. The cofactor is Ca(2+).

The enzyme catalyses ATP-dependent breakage, passage and rejoining of double-stranded DNA.. Functionally, can introduce negative superhelical turns into double-stranded circular DNA. The chain is DNA topoisomerase 2 (TOP2) from Acheta domesticus (House cricket).